A 92-amino-acid polypeptide reads, in one-letter code: Acylphosphatase (92 aa).

The 88-residue stretch at 3 to 90 folds into the Acylphosphatase-like domain; sequence RVHVLVAGRV…GEFTEFAVLR (88 aa). Residues arginine 18 and asparagine 36 contribute to the active site.

This sequence belongs to the acylphosphatase family.

The enzyme catalyses an acyl phosphate + H2O = a carboxylate + phosphate + H(+). The sequence is that of Acylphosphatase (acyP) from Methylococcus capsulatus (strain ATCC 33009 / NCIMB 11132 / Bath).